A 443-amino-acid chain; its full sequence is Protoheme IX farnesyltransferase, mitochondrial (443 aa).

The disordered stretch occupies residues 68–113 (LSQRVKPKPEPPASPFLEHTSSGQARADEDELPSFPAPSRPLSRKP). Transmembrane regions (helical) follow at residues 174-194 (AGFALAPGPFDWSCFLLTSLG), 230-250 (ISPLLAVSFATCCAVPGVALL), 252-272 (WGVNPLTGALGVFNIFLYTCC), 286-306 (VGAVVGAIPPVMGWTAATGSL), 308-328 (AGALLLGGILYSWQFPHFNAL), 363-383 (LIALSTAAPVLDITTWVFPVI), and 410-430 (LFFCSLWHLPLLLLLMLTCKQ).

This sequence belongs to the UbiA prenyltransferase family.

The protein localises to the mitochondrion membrane. The enzyme catalyses heme b + (2E,6E)-farnesyl diphosphate + H2O = Fe(II)-heme o + diphosphate. Converts protoheme IX and farnesyl diphosphate to heme O. In Mus musculus (Mouse), this protein is Protoheme IX farnesyltransferase, mitochondrial (Cox10).